A 347-amino-acid chain; its full sequence is Anthranilate phosphoribosyltransferase (347 aa).

Residues G88, 91–92 (GD), T96, 98–101 (NIST), 116–124 (KHGNRSVSS), and S128 contribute to the 5-phospho-alpha-D-ribose 1-diphosphate site. G88 contacts anthranilate. Position 100 (S100) interacts with Mg(2+). Residue N119 coordinates anthranilate. An anthranilate-binding site is contributed by R174. The Mg(2+) site is built by D232 and E233.

It belongs to the anthranilate phosphoribosyltransferase family. Homodimer. Mg(2+) serves as cofactor.

It catalyses the reaction N-(5-phospho-beta-D-ribosyl)anthranilate + diphosphate = 5-phospho-alpha-D-ribose 1-diphosphate + anthranilate. Its pathway is amino-acid biosynthesis; L-tryptophan biosynthesis; L-tryptophan from chorismate: step 2/5. Catalyzes the transfer of the phosphoribosyl group of 5-phosphorylribose-1-pyrophosphate (PRPP) to anthranilate to yield N-(5'-phosphoribosyl)-anthranilate (PRA). This chain is Anthranilate phosphoribosyltransferase, found in Shewanella sp. (strain MR-7).